A 265-amino-acid chain; its full sequence is Elongation factor 1-delta (265 aa).

A compositionally biased stretch (polar residues) spans 31-54 (MGSASNKPHNSPQSAASALSNSGD). Disordered stretches follow at residues 31–64 (MGSA…RVAN) and 118–155 (KVQV…DAEA). Residues 130–153 (GTGEDDDDDDDIDLFGSDNEEEDA) are compositionally biased toward acidic residues.

Belongs to the EF-1-beta/EF-1-delta family. As to quaternary structure, EF-1 is composed of 4 subunits: alpha, beta, delta, and gamma.

EF-1-beta and EF-1-delta stimulate the exchange of GDP bound to EF-1-alpha to GTP. The sequence is that of Elongation factor 1-delta (eef1d) from Xenopus laevis (African clawed frog).